The sequence spans 188 residues: F-box only protein 36 (188 aa).

The F-box domain occupies 91–137 (FDFLERLSDDLLLNIISYLDLEDIARLCQTSHRFAKLCMSDKLWEQI).

As to quaternary structure, directly interacts with SKP1 and CUL1.

Its function is as follows. Substrate-recognition component of the SCF (SKP1-CUL1-F-box protein)-type E3 ubiquitin ligase complex. In Pongo abelii (Sumatran orangutan), this protein is F-box only protein 36 (FBXO36).